A 318-amino-acid chain; its full sequence is NAC domain-containing protein 68 (318 aa).

In terms of domain architecture, NAC spans 21 to 175 (LPPGFRFHPT…EWVLCRLYNK (155 aa)).

In terms of tissue distribution, expressed in stems, leaf blades and callus. Weakly expressed in developing flowers.

Its subcellular location is the nucleus. Functionally, probable transcription factor involved in stress response. The chain is NAC domain-containing protein 68 from Oryza sativa subsp. japonica (Rice).